The primary structure comprises 110 residues: Circadian clock oscillator protein KaiB (110 aa).

This sequence belongs to the KaiB family. The KaiABC complex composition changes during the circadian cycle to control KaiC phosphorylation. Complexes KaiC(6), KaiA(2-4):KaiC(6), KaiB(6):KaiC(6) and KaiC(6):KaiB(6):KaiA(12) are among the most important forms, many form cooperatively. Undergoes a major conformational rearrangment; in the free state forms homotetramers as a dimer of dimers. When bound to the CI domain of KaiC switches to a monomeric thioredoxin-fold (KaiB(fs)). KaiB(fs) binds CikA, leading it to dephosphorylate phospho-RpaA.

In terms of biological role, key component of the KaiABC oscillator complex, which constitutes the main circadian regulator in cyanobacteria. Complex composition changes during the circadian cycle to control KaiC phosphorylation. KaiA stimulates KaiC autophosphorylation, while KaiB sequesters KaiA, leading to KaiC autodephosphorylation. Phospho-Ser-431 KaiC accumulation triggers binding of KaiB to form the KaiB(6):KaiC(6) complex, leading to changes in output regulators CikA and SasA. KaiB switches to a thioredoxin-like fold (KaiB(fs)) when bound to KaiC. KaiB(6):KaiC(6) formation exposes a site for KaiA binding that sequesters KaiA from KaiC, making the KaiC(6):KaiB(6):KaiA(12) complex that results in KaiC autodephosphorylation. A metamorphic protein which reversibly switches between an inactive tetrameric fold and a rare, thioredoxin-like monomeric fold (KaiB(fs)). KaiB(fs) binds phospho-KaiC, KaiA and CikA. KaiA and CikA compete for binding to KaiB(fs), and KaiB(fs) and SasA compete for binding to KaiC, thus the clock oscillator and output signal pathway are tightly coupled. This chain is Circadian clock oscillator protein KaiB, found in Synechococcus sp. (strain RCC307).